Here is a 497-residue protein sequence, read N- to C-terminus: L-carnitine dehydrogenase/betainyl-CoA thioesterase (497 aa).

The tract at residues 1 to 335 (MSFITKAACV…AKLWANARKP (335 aa)) is L-carnitine dehydrogenase. 11–16 (GGGVIG) is a binding site for NAD(+). The important for dehydrogenase activity stretch occupies residues 330–335 (ANARKP). The interval 336-497 (EADLGDVKPL…AGRFVGQKRA (162 aa)) is betainyl-CoA thioesterase.

This sequence in the N-terminal section; belongs to the 3-hydroxyacyl-CoA dehydrogenase family. L-carnitine dehydrogenase subfamily. It in the C-terminal section; belongs to the betainyl-CoA thioesterase family. As to quaternary structure, homodimer.

The protein resides in the cytoplasm. The catalysed reaction is carnitine + NAD(+) = 3-dehydrocarnitine + NADH + H(+). It carries out the reaction N,N,N-trimethylglycyl-CoA + H2O = glycine betaine + CoA + H(+). Its pathway is amine and polyamine metabolism; carnitine metabolism. In terms of biological role, catalyzes the NAD(+)-dependent oxidation of L-carnitine to 3-dehydrocarnitine. Probably also catalyzes the cleavage of betainyl-CoA (N,N,N-trimethylglycyl-CoA) into glycine betaine and coenzyme A. Despite a high similarity to 3-hydroxyacyl-CoA dehydrogenases, cannot dehydrogenate 3-hydroxybutylate and 3-hydroxybutyl-CoA. Is probably involved in a L-carnitine degradation pathway that allows Rhizobium sp. YS-240 to grow on L-carnitine as the sole source of carbon and nitrogen. This Rhizobium sp protein is L-carnitine dehydrogenase/betainyl-CoA thioesterase.